The following is a 280-amino-acid chain: UPF0276 protein NMA0228 (280 aa).

The protein belongs to the UPF0276 family.

This Neisseria meningitidis serogroup A / serotype 4A (strain DSM 15465 / Z2491) protein is UPF0276 protein NMA0228.